Reading from the N-terminus, the 411-residue chain is Dual-specificity RNA methyltransferase RlmN (411 aa).

The active-site Proton acceptor is the Glu125. The Radical SAM core domain occupies 131 to 380 (EEGRGTLCIS…IRTPRGRDIL (250 aa)). Cys138 and Cys383 are joined by a disulfide. Residues Cys145, Cys149, and Cys152 each coordinate [4Fe-4S] cluster. Residues 209-210 (GE), Ser241, 263-265 (SLH), and Asn340 each bind S-adenosyl-L-methionine. Residue Cys383 is the S-methylcysteine intermediate of the active site.

Belongs to the radical SAM superfamily. RlmN family. It depends on [4Fe-4S] cluster as a cofactor.

It is found in the cytoplasm. It carries out the reaction adenosine(2503) in 23S rRNA + 2 reduced [2Fe-2S]-[ferredoxin] + 2 S-adenosyl-L-methionine = 2-methyladenosine(2503) in 23S rRNA + 5'-deoxyadenosine + L-methionine + 2 oxidized [2Fe-2S]-[ferredoxin] + S-adenosyl-L-homocysteine. The enzyme catalyses adenosine(37) in tRNA + 2 reduced [2Fe-2S]-[ferredoxin] + 2 S-adenosyl-L-methionine = 2-methyladenosine(37) in tRNA + 5'-deoxyadenosine + L-methionine + 2 oxidized [2Fe-2S]-[ferredoxin] + S-adenosyl-L-homocysteine. Functionally, specifically methylates position 2 of adenine 2503 in 23S rRNA and position 2 of adenine 37 in tRNAs. m2A2503 modification seems to play a crucial role in the proofreading step occurring at the peptidyl transferase center and thus would serve to optimize ribosomal fidelity. The polypeptide is Dual-specificity RNA methyltransferase RlmN (Brucella suis biovar 1 (strain 1330)).